Consider the following 194-residue polypeptide: Imidazoleglycerol-phosphate dehydratase (194 aa).

It belongs to the imidazoleglycerol-phosphate dehydratase family.

The protein localises to the cytoplasm. The catalysed reaction is D-erythro-1-(imidazol-4-yl)glycerol 3-phosphate = 3-(imidazol-4-yl)-2-oxopropyl phosphate + H2O. It functions in the pathway amino-acid biosynthesis; L-histidine biosynthesis; L-histidine from 5-phospho-alpha-D-ribose 1-diphosphate: step 6/9. This is Imidazoleglycerol-phosphate dehydratase from Bacillus licheniformis (strain ATCC 14580 / DSM 13 / JCM 2505 / CCUG 7422 / NBRC 12200 / NCIMB 9375 / NCTC 10341 / NRRL NRS-1264 / Gibson 46).